A 276-amino-acid polypeptide reads, in one-letter code: Exosome complex component RRP43 (276 aa).

Ala-2 is subject to N-acetylalanine.

The protein belongs to the RNase PH family. In terms of assembly, component of the RNA exosome core complex (Exo-9), composed of EXOSC1, EXOSC2, EXOSC3, EXOSC4, EXOSC5, EXOSC6, EXOSC7, EXOSC8 and EXOSC9; within the complex interacts with EXOSC5 and EXOSC6. The catalytically inactive RNA exosome core complex (Exo-9) associates with the catalytic subunit EXOSC10/RRP6. Exo-9 may associate with DIS3 to form the nucleolar exosome complex, or DIS3L to form the cytoplasmic exosome complex. Exo-9 is formed by a hexameric base ring consisting of the heterodimers EXOSC4-EXOSC9, EXOSC5-EXOSC8 and EXOSC6-EXOSC7, and a cap ring consisting of EXOSC1, EXOSC2 and EXOSC3. The RNA exosome complex associates with cofactors C1D/RRP47, MPHOSPH6/MPP6 and MTREX/MTR4.

It is found in the cytoplasm. The protein resides in the nucleus. The protein localises to the nucleolus. Functionally, non-catalytic component of the RNA exosome complex which has 3'-&gt;5' exoribonuclease activity and participates in a multitude of cellular RNA processing and degradation events. In the nucleus, the RNA exosome complex is involved in proper maturation of stable RNA species such as rRNA, snRNA and snoRNA, in the elimination of RNA processing by-products and non-coding 'pervasive' transcripts, such as antisense RNA species and promoter-upstream transcripts (PROMPTs), and of mRNAs with processing defects, thereby limiting or excluding their export to the cytoplasm. The RNA exosome may be involved in Ig class switch recombination (CSR) and/or Ig variable region somatic hypermutation (SHM) by targeting AICDA deamination activity to transcribed dsDNA substrates. In the cytoplasm, the RNA exosome complex is involved in general mRNA turnover and specifically degrades inherently unstable mRNAs containing AU-rich elements (AREs) within their 3' untranslated regions, and in RNA surveillance pathways, preventing translation of aberrant mRNAs. It seems to be involved in degradation of histone mRNA. The catalytic inactive RNA exosome core complex of 9 subunits (Exo-9) is proposed to play a pivotal role in the binding and presentation of RNA for ribonucleolysis, and to serve as a scaffold for the association with catalytic subunits and accessory proteins or complexes. EXOSC8 binds to ARE-containing RNAs. In Mus musculus (Mouse), this protein is Exosome complex component RRP43 (Exosc8).